Reading from the N-terminus, the 102-residue chain is Citrate lyase acyl carrier protein (102 aa).

Position 14 is an O-(phosphoribosyl dephospho-coenzyme A)serine (serine 14).

Belongs to the CitD family. As to quaternary structure, oligomer with a subunit composition of (alpha,beta,gamma)6.

Its subcellular location is the cytoplasm. Functionally, covalent carrier of the coenzyme of citrate lyase. In Streptococcus pyogenes serotype M18 (strain MGAS8232), this protein is Citrate lyase acyl carrier protein.